A 406-amino-acid polypeptide reads, in one-letter code: Protein phosphatase 2C (406 aa).

Residues Arg23 to Phe274 enclose the PPM-type phosphatase domain. Residues Asp55, Gly56, Asp221, and Asp265 each coordinate Mn(2+).

It belongs to the PP2C family. Monomer. Mg(2+) is required as a cofactor. It depends on Mn(2+) as a cofactor.

It catalyses the reaction O-phospho-L-seryl-[protein] + H2O = L-seryl-[protein] + phosphate. The enzyme catalyses O-phospho-L-threonyl-[protein] + H2O = L-threonyl-[protein] + phosphate. Enzyme with a broad specificity. This Leishmania chagasi protein is Protein phosphatase 2C.